The following is a 244-amino-acid chain: Ribonuclease PH (244 aa).

Residues Arg90 and 128-130 (GTR) each bind phosphate.

Belongs to the RNase PH family. Homohexameric ring arranged as a trimer of dimers.

The catalysed reaction is tRNA(n+1) + phosphate = tRNA(n) + a ribonucleoside 5'-diphosphate. In terms of biological role, phosphorolytic 3'-5' exoribonuclease that plays an important role in tRNA 3'-end maturation. Removes nucleotide residues following the 3'-CCA terminus of tRNAs; can also add nucleotides to the ends of RNA molecules by using nucleoside diphosphates as substrates, but this may not be physiologically important. Probably plays a role in initiation of 16S rRNA degradation (leading to ribosome degradation) during starvation. The polypeptide is Ribonuclease PH (Prochlorococcus marinus (strain MIT 9313)).